Reading from the N-terminus, the 816-residue chain is Phosphatidylinositol 4-kinase beta (816 aa).

3 disordered regions span residues 1-30, 99-120, and 248-318; these read MGDT…GSLL, EEED…RRRR, and AHRK…SFSS. Position 2 is an N-acetylglycine (glycine 2). The tract at residues 2–68 is interaction with ACBD3; the sequence is GDTVVEPAPL…VKLLHGGVAV (67 aa). The PIK helical domain occupies 52-242; that stretch reads CQDVLEKVKL…GTKLRKLILS (191 aa). Serine 258 is subject to Phosphoserine. A Phosphothreonine modification is found at threonine 263. Phosphoserine is present on residues serine 266, serine 275, serine 277, serine 284, and serine 294. 2 stretches are compositionally biased toward polar residues: residues 278–297 and 306–318; these read DATA…SNPK and SSST…SFSS. At serine 428 the chain carries Phosphoserine. At threonine 438 the chain carries Phosphothreonine. Residue serine 511 is modified to Phosphoserine. 2 positions are modified to phosphothreonine: threonine 517 and threonine 519. The PI3K/PI4K catalytic domain occupies 535-801; that stretch reads EPWQEKVRRI…MVDGSMRSIT (267 aa). The segment at 541–547 is G-loop; that stretch reads VRRIREG. The segment at 668–676 is catalytic loop; it reads QVKDRHNGN. The activation loop stretch occupies residues 687-711; that stretch reads HIDFGFILSSSPRNLGFETSAFKLT.

Belongs to the PI3/PI4-kinase family. Type III PI4K subfamily. Interacts with ARF1 and ARF3 in the Golgi complex, but not with ARF4, ARF5 or ARF6. Interacts with NCS1/FREQ in a calcium-independent manner. Interacts with CALN1/CABP8 and CALN2/CABP7; in a calcium-dependent manner; this interaction competes with NCS1/FREQ binding. Interacts with ACBD3. Interacts with ARMH3, YWHAB, YWHAE, YWHAG, YWHAH, YWHAQ, YWHAZ and SFN. Interacts with GGA2 (via VHS domain); the interaction is important for PI4KB location at the Golgi apparatus membrane. Interacts with ATG9A. Mg(2+) is required as a cofactor. Requires Mn(2+) as cofactor.

It localises to the endomembrane system. The protein localises to the mitochondrion outer membrane. It is found in the rough endoplasmic reticulum membrane. Its subcellular location is the golgi apparatus. The protein resides in the golgi apparatus membrane. The catalysed reaction is a 1,2-diacyl-sn-glycero-3-phospho-(1D-myo-inositol) + ATP = a 1,2-diacyl-sn-glycero-3-phospho-(1D-myo-inositol 4-phosphate) + ADP + H(+). Inhibited by wortmannin. Increased kinase activity upon interaction with NCS1/FREQ. Its function is as follows. Phosphorylates phosphatidylinositol (PI) in the first committed step in the production of the second messenger inositol-1,4,5,-trisphosphate (PIP). May regulate Golgi disintegration/reorganization during mitosis, possibly via its phosphorylation. Involved in Golgi-to-plasma membrane trafficking. The sequence is that of Phosphatidylinositol 4-kinase beta (PI4KB) from Callithrix jacchus (White-tufted-ear marmoset).